A 355-amino-acid chain; its full sequence is MVNFFQIALVLIGSTGIINHVIIIPMLLDHSGRDSWISIIILSLVYIIWIPCVFIVHKYTREEHLFSWLMRNYGGFITYPLLSIIVLYLIILGTVTLKETLTFFSFYLPETPRILLGVLLSIICFYNIQRGVQSIALTTGILLPVVFLLGFFVMIANFPHKDYSLLKPIMEHGMDPVIKGMIYPAAGFVELIFILFLQHHIGSKIKLSQLIIVGIILAGITLGPTIAAIVEFGPFVAANQRYPTFEEWRLVSIGKYIEHLDFLSVYQWLVGVFIRISLVIFLIPDVLQVTKQKARNQIISILLICMVIICILPISDASFYWFLSHVFLPISAIGLFLFSMLLLVFVWVSKNKKRA.

Helical transmembrane passes span 2-24 (VNFF…VIII), 34-56 (DSWI…VFIV), 69-91 (LMRN…YLII), 106-128 (FYLP…FYNI), 135-157 (IALT…MIAN), 180-197 (GMIY…ILFL), 210-232 (LIIV…IVEF), 265-287 (VYQW…PDVL), 299-321 (ISIL…SFYW), and 326-348 (VFLP…FVWV).

It belongs to the amino acid-polyamine-organocation (APC) superfamily. Spore germination protein (SGP) (TC 2.A.3.9) family.

It is found in the cell membrane. In terms of biological role, may allow B.anthracis to germinate within phagocytic cells and therefore involved in virulence. This Bacillus anthracis protein is Spore germination protein XB (gerXB).